Reading from the N-terminus, the 109-residue chain is MFGKGGMGNLMKQAQQMQERMQKLQEEIANMEVTGESGAGLVKVTITGSHSVRRVDIDESLMEDDKEMLEDLIAAAFNDAARRVEETQKEKMASVTGGMQLPPGMKMPF.

2 disordered regions span residues Met-1–Gln-22 and Gln-88–Phe-109.

It belongs to the YbaB/EbfC family. As to quaternary structure, homodimer.

The protein resides in the cytoplasm. It localises to the nucleoid. Functionally, binds to DNA and alters its conformation. May be involved in regulation of gene expression, nucleoid organization and DNA protection. The protein is Nucleoid-associated protein VP2178 of Vibrio parahaemolyticus serotype O3:K6 (strain RIMD 2210633).